Reading from the N-terminus, the 539-residue chain is O-phosphoserine--tRNA(Cys) ligase (539 aa).

Substrate is bound by residues 188–190 (HMT), 233–235 (SAS), 275–276 (YY), and Asn327.

The protein belongs to the class-II aminoacyl-tRNA synthetase family. O-phosphoseryl-tRNA(Cys) synthetase subfamily. In terms of assembly, homotetramer. Interacts with SepCysS.

The catalysed reaction is tRNA(Cys) + O-phospho-L-serine + ATP = O-phospho-L-seryl-tRNA(Cys) + AMP + diphosphate. Its function is as follows. Catalyzes the attachment of O-phosphoserine (Sep) to tRNA(Cys). This Methanococcoides burtonii (strain DSM 6242 / NBRC 107633 / OCM 468 / ACE-M) protein is O-phosphoserine--tRNA(Cys) ligase.